The primary structure comprises 376 residues: Fibromodulin (376 aa).

The first 18 residues, 1-18 (MQWTSLLLLAGLFSLSQA), serve as a signal peptide directing secretion. Gln-19 carries the pyrrolidone carboxylic acid modification. A sulfotyrosine mark is found at Tyr-20, Tyr-38, Tyr-39, Tyr-45, Tyr-47, Tyr-53, and Tyr-55. Residues 67–105 (SPSPPDPRDCPQECDCPPNFPTAMYCDNRNLKYLPFVPS) enclose the LRRNT domain. 8 LRR repeats span residues 106–127 (RMKY…VFDN), 130–151 (GLLW…RKVF), 156–176 (HLER…PLPR), 177–198 (SLRE…ALEG), 201–222 (NLTA…MRGL), 224–245 (SLIL…LPSA), 246–266 (LEQL…YFRG), and 269–289 (KLLY…ASNT). Asn-127 carries N-linked (GlcNAc...) (keratan sulfate) asparagine glycosylation. The N-linked (GlcNAc...) (keratan sulfate) asparagine glycan is linked to Asn-166. An N-linked (GlcNAc...) (keratan sulfate) asparagine glycan is attached at Asn-201. Residue Asn-291 is glycosylated (N-linked (GlcNAc...) (keratan sulfate) asparagine). 2 LRR repeats span residues 294–315 (SLLE…NTNL) and 316–335 (ENLY…SFCT). A disulfide bond links Cys-334 and Cys-367. Residue Asn-341 is glycosylated (N-linked (GlcNAc...) asparagine). One copy of the LRR 11 repeat lies at 344-365 (KLQVLRLDGNEIKRSAMPADAP).

It belongs to the small leucine-rich proteoglycan (SLRP) family. SLRP class II subfamily. As to quaternary structure, binds to type I and type II collagen. Binds keratan sulfate chains.

Its subcellular location is the secreted. It is found in the extracellular space. The protein localises to the extracellular matrix. Its function is as follows. Affects the rate of fibrils formation. May have a primary role in collagen fibrillogenesis. In Homo sapiens (Human), this protein is Fibromodulin (FMOD).